Here is a 170-residue protein sequence, read N- to C-terminus: Two-component response regulator ORR6 (170 aa).

The Response regulatory domain maps to 51-170 (HVLAVDDSSV…DVSRLCSRIR (120 aa)). The residue at position 103 (Asp-103) is a 4-aspartylphosphate.

This sequence belongs to the ARR family. Type-A subfamily. In terms of processing, two-component system major event consists of a His-to-Asp phosphorelay between a sensor histidine kinase (HK) and a response regulator (RR). In plants, the His-to-Asp phosphorelay involves an additional intermediate named Histidine-containing phosphotransfer protein (HPt). This multistep phosphorelay consists of a His-Asp-His-Asp sequential transfer of a phosphate group between first a His and an Asp of the HK protein, followed by the transfer to a conserved His of the HPt protein and finally the transfer to an Asp in the receiver domain of the RR protein. As to expression, expressed in roots, leaf blades, leaf sheaths, shoot apex, flowers and panicles.

Functions as a response regulator involved in His-to-Asp phosphorelay signal transduction system. Phosphorylation of the Asp residue in the receiver domain activates the ability of the protein to promote the transcription of target genes. Type-A response regulators seem to act as negative regulators of the cytokinin signaling. The sequence is that of Two-component response regulator ORR6 from Oryza sativa subsp. japonica (Rice).